Reading from the N-terminus, the 391-residue chain is Testis-expressed protein 9 (391 aa).

Disordered regions lie at residues 1–31 (MAGR…PGPD) and 65–85 (QEVR…EDDY). Positions 188–351 (IGTEAQIRFL…EKQKGELMIG (164 aa)) form a coiled coil.

The protein localises to the cytoplasm. The protein resides in the cytoskeleton. Its subcellular location is the microtubule organizing center. It localises to the centrosome. It is found in the centriolar satellite. The protein is Testis-expressed protein 9 (TEX9) of Homo sapiens (Human).